A 436-amino-acid polypeptide reads, in one-letter code: Ribulose bisphosphate carboxylase large chain (436 aa).

2 residues coordinate substrate: Asn-104 and Thr-154. The active-site Proton acceptor is the Lys-156. Lys-158 provides a ligand contact to substrate. Mg(2+) contacts are provided by Lys-182, Asp-184, and Glu-185. Position 182 is an N6-carboxylysine (Lys-182). His-275 serves as the catalytic Proton acceptor. The substrate site is built by Arg-276, His-308, and Ser-360.

This sequence belongs to the RuBisCO large chain family. Type I subfamily. Heterohexadecamer of 8 large chains and 8 small chains. Mg(2+) is required as a cofactor.

The protein localises to the plastid. It is found in the chloroplast. It catalyses the reaction 2 (2R)-3-phosphoglycerate + 2 H(+) = D-ribulose 1,5-bisphosphate + CO2 + H2O. The enzyme catalyses D-ribulose 1,5-bisphosphate + O2 = 2-phosphoglycolate + (2R)-3-phosphoglycerate + 2 H(+). Its function is as follows. RuBisCO catalyzes two reactions: the carboxylation of D-ribulose 1,5-bisphosphate, the primary event in carbon dioxide fixation, as well as the oxidative fragmentation of the pentose substrate in the photorespiration process. Both reactions occur simultaneously and in competition at the same active site. The chain is Ribulose bisphosphate carboxylase large chain from Euglena viridis (Cercaria viridis).